We begin with the raw amino-acid sequence, 693 residues long: Phenoloxidase subunit 2 (693 aa).

The propeptide occupies 1 to 51; that stretch reads MADVFESLELLFDRPNEPLITPKGENNSVFQLTEQFLTEDYANNGIELNNR. N-linked (GlcNAc...) asparagine glycosylation is found at asparagine 26 and asparagine 64. Cu cation is bound by residues histidine 213, histidine 217, and histidine 243. Glutamate 351 (proton acceptor) is an active-site residue. The Cu cation site is built by histidine 366, histidine 370, and histidine 406. N-linked (GlcNAc...) asparagine glycosylation is found at asparagine 462 and asparagine 494. Cystine bridges form between cysteine 583–cysteine 627 and cysteine 585–cysteine 634. Residue asparagine 680 is glycosylated (N-linked (GlcNAc...) asparagine).

In terms of assembly, heterodimer. It depends on Cu(2+) as a cofactor. The N-terminus is blocked. As to expression, synthesized by hemocytes and released into the hemolymph plasma.

The protein resides in the secreted. It carries out the reaction 2 L-dopa + O2 = 2 L-dopaquinone + 2 H2O. It catalyses the reaction L-tyrosine + O2 = L-dopaquinone + H2O. Functionally, this is a copper-containing oxidase that functions in the formation of pigments such as melanins and other polyphenolic compounds. Catalyzes the rate-limiting conversions of tyrosine to DOPA, DOPA to DOPA-quinone and possibly 5,6 dihydroxyindole to indole-5'6 quinone. The chain is Phenoloxidase subunit 2 from Bombyx mori (Silk moth).